The sequence spans 735 residues: Alpha-adducin (735 aa).

Met1 is subject to N-acetylmethionine. A compositionally biased stretch (low complexity) spans 1 to 11 (MNGDTRAAVVT). The segment at 1 to 21 (MNGDTRAAVVTSPPPTTAPHK) is disordered. A Phosphoserine modification is found at Ser12. Position 59 is a phosphoserine; by PKA (Ser59). Ser64 is modified (phosphoserine). Position 331 is a phosphothreonine (Thr331). Ser334, Ser353, and Ser355 each carry phosphoserine. Thr358 bears the Phosphothreonine mark. Phosphoserine is present on residues Ser364 and Ser366. The residue at position 408 (Ser408) is a Phosphoserine; by PKA. 2 disordered regions span residues 418-486 (GHSF…SAVP) and 576-735 (RREV…KSDS). Phosphoserine is present on Ser427. Thr429 is modified (phosphothreonine). Ser431 carries the post-translational modification Phosphoserine. Position 436 is a phosphoserine; by PKA (Ser436). Residue Thr445 is modified to Phosphothreonine; by ROCK2. Phosphoserine occurs at positions 464 and 465. At Thr480 the chain carries Phosphothreonine; by ROCK2. Residue Ser481 is modified to Phosphoserine; by PKA. Residues 576–601 (RREVERKQKGSEENLDETREQKEKSP) show a composition bias toward basic and acidic residues. Residues Ser586, Ser600, and Ser605 each carry the phosphoserine modification. Thr610 bears the Phosphothreonine mark. Position 613 is a phosphoserine (Ser613). Thr614 is subject to Phosphothreonine. A compositionally biased stretch (low complexity) spans 678 to 712 (EPASASAPGAEEVASPATEEGSPMDPGSDGSPGKS). A phosphoserine mark is found at Ser705, Ser708, and Ser712. A compositionally biased stretch (basic residues) spans 713–735 (PSKKKKKFRTPSFLKKSKKKSDS). Ser714 is subject to Phosphoserine; by PKC. The interaction with calmodulin stretch occupies residues 715–732 (KKKKKFRTPSFLKKSKKK). Ser724 is subject to Phosphoserine; by PKA and PKC.

Belongs to the aldolase class II family. Adducin subfamily. As to quaternary structure, heterodimer of an alpha and a beta subunit or an alpha and a gamma subunit.

The protein localises to the cytoplasm. Its subcellular location is the cytoskeleton. The protein resides in the cell membrane. Functionally, membrane-cytoskeleton-associated protein that promotes the assembly of the spectrin-actin network. Binds to calmodulin. The sequence is that of Alpha-adducin (Add1) from Rattus norvegicus (Rat).